A 270-amino-acid polypeptide reads, in one-letter code: Formamidopyrimidine-DNA glycosylase (270 aa).

Pro2 serves as the catalytic Schiff-base intermediate with DNA. Catalysis depends on Glu3, which acts as the Proton donor. The active-site Proton donor; for beta-elimination activity is Lys58. 3 residues coordinate DNA: His91, Arg110, and Arg151. An FPG-type zinc finger spans residues 236–270; sequence FVYGRGGENCKVCGTGLREIKLGQRASVYCPRCQS. Arg260 acts as the Proton donor; for delta-elimination activity in catalysis.

It belongs to the FPG family. Monomer. Requires Zn(2+) as cofactor.

The enzyme catalyses Hydrolysis of DNA containing ring-opened 7-methylguanine residues, releasing 2,6-diamino-4-hydroxy-5-(N-methyl)formamidopyrimidine.. It carries out the reaction 2'-deoxyribonucleotide-(2'-deoxyribose 5'-phosphate)-2'-deoxyribonucleotide-DNA = a 3'-end 2'-deoxyribonucleotide-(2,3-dehydro-2,3-deoxyribose 5'-phosphate)-DNA + a 5'-end 5'-phospho-2'-deoxyribonucleoside-DNA + H(+). Functionally, involved in base excision repair of DNA damaged by oxidation or by mutagenic agents. Acts as a DNA glycosylase that recognizes and removes damaged bases. Has a preference for oxidized purines, such as 7,8-dihydro-8-oxoguanine (8-oxoG). Has AP (apurinic/apyrimidinic) lyase activity and introduces nicks in the DNA strand. Cleaves the DNA backbone by beta-delta elimination to generate a single-strand break at the site of the removed base with both 3'- and 5'-phosphates. The polypeptide is Formamidopyrimidine-DNA glycosylase (Pseudomonas fluorescens (strain ATCC BAA-477 / NRRL B-23932 / Pf-5)).